The sequence spans 360 residues: Phospho-N-acetylmuramoyl-pentapeptide-transferase (360 aa).

The next 10 helical transmembrane spans lie at 25–45 (RGILGVLTALSLALWLGPWMI), 73–93 (TMGGALILSAIAISTLLWADL), 97–117 (YVWVVLIVTLAFGAIGWVDDY), 134–154 (YFWQSVFGLAAAIFLYKTAPT), 168–188 (LAIPLGAGFIVLTYFVIVGSS), 199–219 (GLAIMPTVMVGGALGIFCYLS), 236–256 (AGELIVFCGALIGAGLGFLWF), 263–283 (VFMGDVGALALGAALGTIAVI), 288–308 (VVLFIMGGVFVMETLSVVIQV), and 338–358 (VIVRFWIITVILVLIGLATLK).

It belongs to the glycosyltransferase 4 family. MraY subfamily. The cofactor is Mg(2+).

The protein resides in the cell inner membrane. The enzyme catalyses UDP-N-acetyl-alpha-D-muramoyl-L-alanyl-gamma-D-glutamyl-meso-2,6-diaminopimeloyl-D-alanyl-D-alanine + di-trans,octa-cis-undecaprenyl phosphate = di-trans,octa-cis-undecaprenyl diphospho-N-acetyl-alpha-D-muramoyl-L-alanyl-D-glutamyl-meso-2,6-diaminopimeloyl-D-alanyl-D-alanine + UMP. The protein operates within cell wall biogenesis; peptidoglycan biosynthesis. Functionally, catalyzes the initial step of the lipid cycle reactions in the biosynthesis of the cell wall peptidoglycan: transfers peptidoglycan precursor phospho-MurNAc-pentapeptide from UDP-MurNAc-pentapeptide onto the lipid carrier undecaprenyl phosphate, yielding undecaprenyl-pyrophosphoryl-MurNAc-pentapeptide, known as lipid I. The polypeptide is Phospho-N-acetylmuramoyl-pentapeptide-transferase (Pseudomonas entomophila (strain L48)).